The sequence spans 152 residues: Lipoprotein signal peptidase (152 aa).

A run of 2 helical transmembrane segments spans residues 55–75 and 85–105; these read NKMW…VFYM and LGIS…DRVF. Residues aspartate 111 and aspartate 129 contribute to the active site. The chain crosses the membrane as a helical span at residues 124–144; it reads VFNIADSALCIGVVLIIIQTL.

This sequence belongs to the peptidase A8 family.

It localises to the cell membrane. It carries out the reaction Release of signal peptides from bacterial membrane prolipoproteins. Hydrolyzes -Xaa-Yaa-Zaa-|-(S,diacylglyceryl)Cys-, in which Xaa is hydrophobic (preferably Leu), and Yaa (Ala or Ser) and Zaa (Gly or Ala) have small, neutral side chains.. Its pathway is protein modification; lipoprotein biosynthesis (signal peptide cleavage). Its function is as follows. This protein specifically catalyzes the removal of signal peptides from prolipoproteins. The chain is Lipoprotein signal peptidase from Bacillus cytotoxicus (strain DSM 22905 / CIP 110041 / 391-98 / NVH 391-98).